Here is a 321-residue protein sequence, read N- to C-terminus: UPF0026 protein MJ1312 (321 aa).

Residues 11 to 236 (RRLGKSLGIN…AIFNEIIGKN (226 aa)) form the Radical SAM core domain. [4Fe-4S] cluster is bound by residues C27, C31, and C34.

It belongs to the UPF0026 family. Requires [4Fe-4S] cluster as cofactor.

This is UPF0026 protein MJ1312 from Methanocaldococcus jannaschii (strain ATCC 43067 / DSM 2661 / JAL-1 / JCM 10045 / NBRC 100440) (Methanococcus jannaschii).